The following is a 348-amino-acid chain: Probable mitochondrial adenine nucleotide transporter BTL1 (348 aa).

Solcar repeat units lie at residues 46–129 (SREA…VKRA), 157–241 (SWIS…MKTS), and 251–338 (LSRP…WKDI). 6 helical membrane passes run 52 to 72 (FLSG…LETI), 104 to 124 (GNEI…GTFE), 156 to 176 (ISWI…STLV), 213 to 233 (FYAG…CYYF), 256 to 276 (MLVL…PLEV), and 321 to 341 (VMPS…ILLA).

This sequence belongs to the mitochondrial carrier (TC 2.A.29) family.

It localises to the mitochondrion inner membrane. Its function is as follows. Probable mitochondrial adenylate carrier that catalyzes the transport of ATP, ADP and AMP. This Arabidopsis thaliana (Mouse-ear cress) protein is Probable mitochondrial adenine nucleotide transporter BTL1.